A 769-amino-acid polypeptide reads, in one-letter code: MALRPQRTFRRRQVESSDSDSDSDGAKEQSAEEPASAGGRTEGAERPRGARSARGRGRVWASSRRSPGAAPRGDGGAECRTAELSTDEEEGTHTLTGSKGDRSPSSDSSCSLEERDVSPIVEIPDAAFIQAARRKRELARTPGDYISLDVNHSCSTSDCKRSNEEDPESDPDDHEKRILFTPKPQTLRQRMAEETSIRSEESSEESQEDENQDIWEQQQMRKAVRIPAGQNTDLSHSSKSQTLKKFDTSISFPPVNLEIIKKQLNNRLTLLQESHRSHQREYEKYEQDIKSSKTAIQNLESASDHAQNYRFYRGMKSYVENIIDCLNEKIVSIVELESSMYTLLLKRSEALLKRRQDELKCESSYLQQLSRKDETSANGSLAVDEKDQRILEEIEARRMQRRQARELSGSCDHQEGMSSDDELSPAEMTNFHKCQGDILQDCKKVFEDVHDDFCNVQNILLKFQQWREKFPDSYYEAFVGFCLPKLLSPLIRVQLLDWNPLKMDSIGLDKMPWFTAITEFMESSMDDIGKEDGSDKKILAAVINKTVVPRLTDFVETIWDPLSTSQTRSLTVHCRVAFEQFASENEVSKNKQDLLKSIVARMKKSIEDDIFIPLYPKSSEEGKMSPHSKFQERQFWGALKLFRNILLWNGLLPDDTLQDLGLGKLLNRYLIISLTNAVPGPDVVKKCSQIAACLPERWFENSAMRTSIPQLENFIKFLLQSAQKLSSSEFRNEVSEIILILVKVKALTQAESLREERPLEPLPAQSTGV.

Disordered regions lie at residues 1 to 122 and 134 to 212; these read MALR…PIVE and RKRE…DENQ. Phosphoserine occurs at positions 16, 17, 19, and 85. Threonine 86 is subject to Phosphothreonine. Residues serine 118 and serine 169 each carry the phosphoserine modification. Positions 190 to 201 are enriched in basic and acidic residues; it reads RMAEETSIRSEE. Residues 202-212 are compositionally biased toward acidic residues; the sequence is SSEESQEDENQ. Residues serine 203 and serine 206 each carry the phosphoserine modification. Residues 256–308 adopt a coiled-coil conformation; that stretch reads NLEIIKKQLNNRLTLLQESHRSHQREYEKYEQDIKSSKTAIQNLESASDHAQN.

It belongs to the GCF family. In terms of assembly, found in the Intron Large (IL) complex, a post-mRNA release spliceosomal complex containing the excised intron, U2, U5 and U6 snRNPs, and splicing factors. Interacts with TFIP11 and DHX15.

It is found in the nucleus. It localises to the nucleoplasm. Its subcellular location is the nucleolus. Its function is as follows. Involved in pre-mRNA splicing through regulating spliceosome C complex formation. May play a role during late-stage splicing events and turnover of excised introns. In Mus musculus (Mouse), this protein is Intron Large complex component GCFC2 (Gcfc2).